We begin with the raw amino-acid sequence, 182 residues long: Large ribosomal subunit protein uL6 (182 aa).

Belongs to the universal ribosomal protein uL6 family. Part of the 50S ribosomal subunit.

In terms of biological role, this protein binds to the 23S rRNA, and is important in its secondary structure. It is located near the subunit interface in the base of the L7/L12 stalk, and near the tRNA binding site of the peptidyltransferase center. This Methanococcus maripaludis (strain C7 / ATCC BAA-1331) protein is Large ribosomal subunit protein uL6.